We begin with the raw amino-acid sequence, 305 residues long: Sulfate adenylyltransferase subunit 2 (305 aa).

It belongs to the PAPS reductase family. CysD subfamily. In terms of assembly, heterodimer composed of CysD, the smaller subunit, and CysN.

It carries out the reaction sulfate + ATP + H(+) = adenosine 5'-phosphosulfate + diphosphate. The protein operates within sulfur metabolism; hydrogen sulfide biosynthesis; sulfite from sulfate: step 1/3. With CysN forms the ATP sulfurylase (ATPS) that catalyzes the adenylation of sulfate producing adenosine 5'-phosphosulfate (APS) and diphosphate, the first enzymatic step in sulfur assimilation pathway. APS synthesis involves the formation of a high-energy phosphoric-sulfuric acid anhydride bond driven by GTP hydrolysis by CysN coupled to ATP hydrolysis by CysD. This is Sulfate adenylyltransferase subunit 2 from Azotobacter vinelandii (strain DJ / ATCC BAA-1303).